Consider the following 662-residue polypeptide: Probable conjugal transfer protein TrbE part 2 (662 aa).

Position 307–314 (307–314) interacts with ATP; it reads GPTGSGKS.

This sequence belongs to the TrbE/VirB4 family.

This chain is Probable conjugal transfer protein TrbE part 2 (trbEB), found in Sinorhizobium fredii (strain NBRC 101917 / NGR234).